A 270-amino-acid polypeptide reads, in one-letter code: Putative [LysW]-aminoadipate/[LysW]-glutamate kinase (270 aa).

Residues 42-43 (GG), Arg-69, and Asn-177 each bind substrate.

It belongs to the acetylglutamate kinase family. LysZ subfamily.

It localises to the cytoplasm. The enzyme catalyses [amino-group carrier protein]-C-terminal-N-(1,4-dicarboxybutan-1-yl)-L-glutamine + ATP = [amino-group carrier protein]-C-terminal-N-(1-carboxy-5-phosphooxy-5-oxopentan-1-yl)-L-glutamine + ADP. It carries out the reaction [amino-group carrier protein]-C-terminal-gamma-(L-glutamyl)-L-glutamate + ATP = [amino-group carrier protein]-C-terminal-gamma-(5-phospho-L-glutamyl)-L-glutamate + ADP. It functions in the pathway amino-acid biosynthesis; L-lysine biosynthesis via AAA pathway; L-lysine from L-alpha-aminoadipate (Thermus route): step 2/5. Its pathway is amino-acid biosynthesis; L-arginine biosynthesis. Involved in both the arginine and lysine biosynthetic pathways. Phosphorylates the LysW-bound precursors glutamate (for arginine biosynthesis), respectively alpha-aminoadipate (for lysine biosynthesis). This Aeropyrum pernix (strain ATCC 700893 / DSM 11879 / JCM 9820 / NBRC 100138 / K1) protein is Putative [LysW]-aminoadipate/[LysW]-glutamate kinase.